A 96-amino-acid chain; its full sequence is MMSLSFMLGLIFPVFFMFTLANPMSLLLLLLIMSLCAVLWLGSIMSSWFAYILFIVYIGGILVLFIYVCMISSNYITGLYKYKTLLYVGMVVALMS.

2 helical membrane passes run 24–44 (MSLLLLLLIMSLCAVLWLGSI) and 48–68 (WFAYILFIVYIGGILVLFIYV).

This sequence belongs to the complex I subunit 6 family.

It is found in the mitochondrion membrane. It catalyses the reaction a ubiquinone + NADH + 5 H(+)(in) = a ubiquinol + NAD(+) + 4 H(+)(out). Functionally, core subunit of the mitochondrial membrane respiratory chain NADH dehydrogenase (Complex I) that is believed to belong to the minimal assembly required for catalysis. Complex I functions in the transfer of electrons from NADH to the respiratory chain. The immediate electron acceptor for the enzyme is believed to be ubiquinone. The chain is NADH-ubiquinone oxidoreductase chain 6 (ND6) from Albinaria turrita (Door snail).